We begin with the raw amino-acid sequence, 589 residues long: MYRWLVRILGTIFRFCDRSVPPARALLKRRRSDSTLFSTVDTDEIPAKRPRLDCFIHQVKNSLYNAASLFGFPFQLTTKPMVTSACNGTRNVAPSGEVFSNPSSCELTGSGSWNNMLKLGNKSPNGISDYPKIRVTVTRDQPRRVLPSFGFTLNSEGYNRRPGGRRHSKGNPESSLMWKPQEQAVTEMISEESGKGLRRPHRTVEEGVQKEEREKYRKLLERLKESGHGNSVCPVTSNYHSSQRSQMDTLKTKGWGEEQNHGVKTTQFVPKQYRLVETRGPLCSLRSEKRCSKGKITDTEKMVGIRFENESRRGYQLEPDLSEEVSARLRLGSGSNGLLRRKVSIIETKEKNCSGKERDRRTDDLLELTEDMEKEISNALGHGPQDEILSSAFKLRITRGDIQTLKNYHWLNDEVINFYMNLLVERNKKQGYPALHVFSTFFYPKLKSGGYQAVKRWTKGVNLFEQEIILVPIHRKVHWSLVVIDLRKKCLKYLDSMGQKGHRICEILLQYLQDESKTKRNIDLNLLEWTHYSMKPHEIPQQLNGSDCGMFTCKYADYISRDKPITFTQHQMPLFRKKMVWEILHQQLL.

The Nuclear localization signal motif lies at lysine 28–arginine 31. Position 32 is a phosphoserine (serine 32). Residues proline 46–arginine 51 carry the Nuclear localization signal motif. Positions glycine 71 to histidine 382 are axin-binding. 2 disordered regions span residues serine 148 to lysine 179 and glutamate 191 to lysine 210. Residues leucine 317–glycine 332 carry the Nuclear export signal motif. Phosphoserine occurs at positions 333 and 344. The segment at leucine 395–isoleucine 559 is protease. Residues histidine 478 and aspartate 495 contribute to the active site. The active-site Nucleophile is cysteine 548.

This sequence belongs to the peptidase C48 family. As to quaternary structure, binds to SUMO2 and SUMO3. Interacts with the C-terminal domain of NUP153 via its N-terminus. Interacts with MTA1. Post-translationally, polyubiquitinated; which leads to proteasomal degradation.

It localises to the nucleus. The protein resides in the nuclear pore complex. The protein localises to the nucleus membrane. It is found in the cytoplasm. Functionally, protease that catalyzes two essential functions in the SUMO pathway. The first is the hydrolysis of an alpha-linked peptide bond at the C-terminal end of the small ubiquitin-like modifier (SUMO) propeptides, SUMO1, SUMO2 and SUMO3 leading to the mature form of the proteins. The second is the deconjugation of SUMO1, SUMO2 and SUMO3 from targeted proteins, by cleaving an epsilon-linked peptide bond between the C-terminal glycine of the mature SUMO and the lysine epsilon-amino group of the target protein. May down-regulate CTNNB1 levels and thereby modulate the Wnt pathway. Deconjugates SUMO2 from MTA1. Plays a dynamic role in adipogenesis by desumoylating and promoting the stabilization of CEBPB. Acts as a regulator of the cGAS-STING pathway by catalyzing desumoylation of CGAS and STING1 during the late phase of viral infection. The chain is Sentrin-specific protease 2 (SENP2) from Pongo abelii (Sumatran orangutan).